The primary structure comprises 172 residues: 3-hydroxydecanoyl-[acyl-carrier-protein] dehydratase (172 aa).

Residue His-71 is part of the active site.

This sequence belongs to the thioester dehydratase family. FabA subfamily. Homodimer.

It is found in the cytoplasm. It carries out the reaction a (3R)-hydroxyacyl-[ACP] = a (2E)-enoyl-[ACP] + H2O. It catalyses the reaction (3R)-hydroxydecanoyl-[ACP] = (2E)-decenoyl-[ACP] + H2O. The catalysed reaction is (2E)-decenoyl-[ACP] = (3Z)-decenoyl-[ACP]. It functions in the pathway lipid metabolism; fatty acid biosynthesis. Functionally, necessary for the introduction of cis unsaturation into fatty acids. Catalyzes the dehydration of (3R)-3-hydroxydecanoyl-ACP to E-(2)-decenoyl-ACP and then its isomerization to Z-(3)-decenoyl-ACP. Can catalyze the dehydratase reaction for beta-hydroxyacyl-ACPs with saturated chain lengths up to 16:0, being most active on intermediate chain length. This chain is 3-hydroxydecanoyl-[acyl-carrier-protein] dehydratase, found in Aliivibrio fischeri (strain ATCC 700601 / ES114) (Vibrio fischeri).